Here is a 752-residue protein sequence, read N- to C-terminus: Photosystem I P700 chlorophyll a apoprotein A1 (752 aa).

8 helical membrane-spanning segments follow: residues 73-96 (IFSA…FHGA), 159-182 (LYVT…FHYH), 198-222 (MNHH…HVSL), 294-312 (RAHH…GHMY), 349-372 (WHAQ…HHMY), 388-414 (LCLF…IFMV), 436-458 (AIIS…LYIH), and 533-551 (FLVH…LILL). [4Fe-4S] cluster is bound by residues cysteine 575 and cysteine 584. Helical transmembrane passes span 591-612 (HVFL…HFSW) and 666-688 (LSAY…MFLF). Residue histidine 677 participates in chlorophyll a' binding. Chlorophyll a-binding residues include methionine 685 and tyrosine 693. Tryptophan 694 is a binding site for phylloquinone. A helical transmembrane segment spans residues 726–746 (AVGVAHYLLGGIATTWSFFHA).

Belongs to the PsaA/PsaB family. The PsaA/B heterodimer binds the P700 chlorophyll special pair and subsequent electron acceptors. PSI consists of a core antenna complex that captures photons, and an electron transfer chain that converts photonic excitation into a charge separation. The eukaryotic PSI reaction center is composed of at least 11 subunits. Requires P700 is a chlorophyll a/chlorophyll a' dimer, A0 is one or more chlorophyll a, A1 is one or both phylloquinones and FX is a shared 4Fe-4S iron-sulfur center. as cofactor.

The protein resides in the plastid. It localises to the cyanelle thylakoid membrane. The enzyme catalyses reduced [plastocyanin] + hnu + oxidized [2Fe-2S]-[ferredoxin] = oxidized [plastocyanin] + reduced [2Fe-2S]-[ferredoxin]. Its function is as follows. PsaA and PsaB bind P700, the primary electron donor of photosystem I (PSI), as well as the electron acceptors A0, A1 and FX. PSI is a cytochrome c6-ferredoxin oxidoreductase, converting photonic excitation into a charge separation, which transfers an electron from the donor P700 chlorophyll pair to the spectroscopically characterized acceptors A0, A1, FX, FA and FB in turn. Oxidized P700 is reduced on the lumenal side of the thylakoid membrane by cytochrome c6. The polypeptide is Photosystem I P700 chlorophyll a apoprotein A1 (Cyanophora paradoxa).